We begin with the raw amino-acid sequence, 25 residues long: Large ribosomal subunit protein uL30 (25 aa).

It belongs to the universal ribosomal protein uL30 family. In terms of assembly, part of the 50S ribosomal subunit.

The sequence is that of Large ribosomal subunit protein uL30 (rpmD) from Pseudomonas putida (Arthrobacter siderocapsulatus).